Consider the following 475-residue polypeptide: MSTTPTITLADLERIREPYKVLSKTARPENPSGQCTYREYLFSDAVKYPIYKRATMTNEEIVTFFGKITSDKHTHMTESDMWTFVQCALSLKDPVDRSSIFDKGFWDANHLCADYATAQPANTGKVAMSHHNPGVVVTQLVPKYDTGGSSSQETESMASKAEAISFYFAWLTRFSVKQAPNTINVLYDRVRATYLKFYSTSSSIFDTFRPSNTWLQGLKDAFDTFPRVKNTLILHVAHAETYFRPTPKIFNVLRFLFFQNLEFMGLHAYVSIVTIMSKVALPPSQVLSWLRVSGSEMAIDEAFMIMNTLDNGMIDNGHNAERLWKYARCLDQGYFNRLQSSYSAELIAMLAYIEINMGISTEVGYNSPLNIYAIANNKAVKEVGRMKADVFIQCKNSVVSLTQDASVIDKVYAAAQQKHIRSEEAARPSEQNKEDEVVAMDTDAPSRKRRSDALTTEKPKKALPAIIKLPNIPDF.

Basic and acidic residues-rich tracts occupy residues 421–436 and 451–460; these read RSEE…KEDE and SDALTTEKPK. Residues 421–461 form a disordered region; it reads RSEEAARPSEQNKEDEVVAMDTDAPSRKRRSDALTTEKPKK.

It belongs to the nucleorhabdovirus nucleocapsid protein family.

Its subcellular location is the virion. In Aphis (Hairy beggarticks), this protein is Nucleoprotein (N).